Consider the following 321-residue polypeptide: Urease accessory protein UreD (321 aa).

This sequence belongs to the UreD family. UreD, UreF and UreG form a complex that acts as a GTP-hydrolysis-dependent molecular chaperone, activating the urease apoprotein by helping to assemble the nickel containing metallocenter of UreC. The UreE protein probably delivers the nickel.

The protein localises to the cytoplasm. Required for maturation of urease via the functional incorporation of the urease nickel metallocenter. The polypeptide is Urease accessory protein UreD (Yersinia pseudotuberculosis serotype O:1b (strain IP 31758)).